The primary structure comprises 205 residues: Large ribosomal subunit protein uL4 (205 aa).

Residues 65–99 are disordered; the sequence is RQKGTGGARHGSRKSPTFRHGGVYKGPTPRSHGHD.

This sequence belongs to the universal ribosomal protein uL4 family. Part of the 50S ribosomal subunit.

Its function is as follows. One of the primary rRNA binding proteins, this protein initially binds near the 5'-end of the 23S rRNA. It is important during the early stages of 50S assembly. It makes multiple contacts with different domains of the 23S rRNA in the assembled 50S subunit and ribosome. Functionally, forms part of the polypeptide exit tunnel. The polypeptide is Large ribosomal subunit protein uL4 (Ruegeria pomeroyi (strain ATCC 700808 / DSM 15171 / DSS-3) (Silicibacter pomeroyi)).